Reading from the N-terminus, the 74-residue chain is ATP synthase subunit c (74 aa).

The next 2 membrane-spanning stretches (helical) occupy residues 8–28 (FIGI…VSNI) and 52–72 (IGAG…MLLI).

This sequence belongs to the ATPase C chain family. In terms of assembly, F-type ATPases have 2 components, F(1) - the catalytic core - and F(0) - the membrane proton channel. F(1) has five subunits: alpha(3), beta(3), gamma(1), delta(1), epsilon(1). F(0) has three main subunits: a(1), b(2) and c(10-14). The alpha and beta chains form an alternating ring which encloses part of the gamma chain. F(1) is attached to F(0) by a central stalk formed by the gamma and epsilon chains, while a peripheral stalk is formed by the delta and b chains.

It is found in the cell inner membrane. Its function is as follows. F(1)F(0) ATP synthase produces ATP from ADP in the presence of a proton or sodium gradient. F-type ATPases consist of two structural domains, F(1) containing the extramembraneous catalytic core and F(0) containing the membrane proton channel, linked together by a central stalk and a peripheral stalk. During catalysis, ATP synthesis in the catalytic domain of F(1) is coupled via a rotary mechanism of the central stalk subunits to proton translocation. In terms of biological role, key component of the F(0) channel; it plays a direct role in translocation across the membrane. A homomeric c-ring of between 10-14 subunits forms the central stalk rotor element with the F(1) delta and epsilon subunits. The protein is ATP synthase subunit c of Rickettsia felis (strain ATCC VR-1525 / URRWXCal2) (Rickettsia azadi).